The sequence spans 31 residues: Gamma-conotoxin-like As7a (31 aa).

Intrachain disulfides connect C2/C16, C9/C20, and C15/C31. Residue E14 is modified to 4-carboxyglutamate.

It belongs to the conotoxin O1 superfamily. As to expression, expressed by the venom duct.

The protein resides in the secreted. Its function is as follows. Gamma-conotoxins may act on voltage-gated non-specific cation pacemaker channels (HCN). Elicits toxic effects in the freshwater snail Pomacea paludosa after intramuscular injection, but it has no effect when injected intracerebrally into mice. The sequence is that of Gamma-conotoxin-like As7a from Conus cancellatus (Cancellate cone).